Here is a 727-residue protein sequence, read N- to C-terminus: Tubulin polyglutamylase TTLL11 (727 aa).

Positions 1–12 (MRRSSPEKKPEA) are enriched in basic and acidic residues. The disordered stretch occupies residues 1–88 (MRRSSPEKKP…ARVVRRLPPA (88 aa)). Positions 17-34 (DAAAAAAATAAATESLPA) are enriched in low complexity. Composition is skewed to basic and acidic residues over residues 49 to 63 (DPER…KDVG) and 72 to 81 (HAPEEGEARV). In terms of domain architecture, TTL spans 125–477 (PVTVDSSKAR…EVKVAVIRDT (353 aa)). ATP contacts are provided by residues K246, 252 to 253 (QG), 279 to 282 (QEYI), and 292 to 294 (KFD). Q252 is an a protein binding site. R318 serves as a coordination point for L-glutamate. Residue 340–341 (TN) coordinates ATP. L-glutamate is bound by residues Y342, S343, and K362. The Mg(2+) site is built by D425, E438, and N440. The segment at 464–566 (LVDEEVKVAV…SICLKQVFPK (103 aa)) is c-MTBD region. K470 contributes to the L-glutamate binding site. Disordered regions lie at residues 530–551 (KSFT…EPNP) and 694–727 (RPLQ…LSQS).

Belongs to the tubulin--tyrosine ligase family. The cofactor is Mg(2+). In terms of tissue distribution, highly expressed in brain, kidney, liver, lung, muscle and testis. Expressed in heart, spleen and trachea. In the brain, expressed in ependymal cilia, cortex, corpus callosum and striatum.

It localises to the cytoplasm. The protein resides in the cytoskeleton. It is found in the cilium basal body. It catalyses the reaction L-glutamyl-[protein] + L-glutamate + ATP = gamma-L-glutamyl-L-glutamyl-[protein] + ADP + phosphate + H(+). The catalysed reaction is (L-glutamyl)(n)-gamma-L-glutamyl-L-glutamyl-[protein] + L-glutamate + ATP = (L-glutamyl)(n+1)-gamma-L-glutamyl-L-glutamyl-[protein] + ADP + phosphate + H(+). Its function is as follows. Polyglutamylase which modifies tubulin, generating polyglutamate side chains of variable lengths on the gamma-carboxyl group of specific glutamate residues within the C-terminal tail of tubulin. Preferentially mediates ATP-dependent polyglutamate long side-chain elongation over the initiation step of the polyglutamylation reaction. Preferentially modifies the alpha-tubulin tail over a beta-tail. Required for CCSAP localization to both spindle and cilia microtubules. Promotes tubulin polyglutamylation which stimulates spastin/SPAST-mediated microtubule severing, thereby regulating microtubule functions. The sequence is that of Tubulin polyglutamylase TTLL11 from Mus musculus (Mouse).